We begin with the raw amino-acid sequence, 246 residues long: MPAKLSVNLNAIAMLRNRRDLPWPSVTGLGRAALAAGAAGLTVHPRPDQRHIRFSDLGDIRALIDDEYPQAEFNIEGFPSEAFLDLVEKHEPEQVTLVPDDPMQATSDHGWDFMSKADFLAPIVARLKGRGMRVSLFADPDSLGYERAKAIGADRVELYTGPYGATHDDPAAAARELDRLEKAARAATALGLAVNAGHDLTVDNLPALVKRIPQLAEVSIGHGLTADALMYGIPVTVSRYITALAG.

3-amino-2-oxopropyl phosphate-binding residues include asparagine 8 and arginine 19. The Proton acceptor role is filled by histidine 44. Residues arginine 46 and histidine 51 each coordinate 1-deoxy-D-xylulose 5-phosphate. The Proton acceptor role is filled by glutamate 76. Threonine 106 contacts 1-deoxy-D-xylulose 5-phosphate. The active-site Proton donor is the histidine 198. 3-amino-2-oxopropyl phosphate-binding positions include aspartate 199 and 221–222; that span reads GH.

The protein belongs to the PNP synthase family. Homooctamer; tetramer of dimers.

The protein localises to the cytoplasm. It carries out the reaction 3-amino-2-oxopropyl phosphate + 1-deoxy-D-xylulose 5-phosphate = pyridoxine 5'-phosphate + phosphate + 2 H2O + H(+). Its pathway is cofactor biosynthesis; pyridoxine 5'-phosphate biosynthesis; pyridoxine 5'-phosphate from D-erythrose 4-phosphate: step 5/5. In terms of biological role, catalyzes the complicated ring closure reaction between the two acyclic compounds 1-deoxy-D-xylulose-5-phosphate (DXP) and 3-amino-2-oxopropyl phosphate (1-amino-acetone-3-phosphate or AAP) to form pyridoxine 5'-phosphate (PNP) and inorganic phosphate. This chain is Pyridoxine 5'-phosphate synthase, found in Brucella abortus (strain S19).